We begin with the raw amino-acid sequence, 423 residues long: Serine--tRNA ligase (423 aa).

230–232 (TAE) provides a ligand contact to L-serine. 261 to 263 (RAE) lines the ATP pocket. Residue Glu284 participates in L-serine binding. Position 348 to 351 (348 to 351 (EISS)) interacts with ATP. Ser384 is a binding site for L-serine.

This sequence belongs to the class-II aminoacyl-tRNA synthetase family. Type-1 seryl-tRNA synthetase subfamily. As to quaternary structure, homodimer. The tRNA molecule binds across the dimer.

The protein resides in the cytoplasm. It catalyses the reaction tRNA(Ser) + L-serine + ATP = L-seryl-tRNA(Ser) + AMP + diphosphate + H(+). The catalysed reaction is tRNA(Sec) + L-serine + ATP = L-seryl-tRNA(Sec) + AMP + diphosphate + H(+). The protein operates within aminoacyl-tRNA biosynthesis; selenocysteinyl-tRNA(Sec) biosynthesis; L-seryl-tRNA(Sec) from L-serine and tRNA(Sec): step 1/1. Its function is as follows. Catalyzes the attachment of serine to tRNA(Ser). Is also able to aminoacylate tRNA(Sec) with serine, to form the misacylated tRNA L-seryl-tRNA(Sec), which will be further converted into selenocysteinyl-tRNA(Sec). This chain is Serine--tRNA ligase, found in Acetivibrio thermocellus (strain ATCC 27405 / DSM 1237 / JCM 9322 / NBRC 103400 / NCIMB 10682 / NRRL B-4536 / VPI 7372) (Clostridium thermocellum).